The sequence spans 275 residues: Leucine-rich repeat-containing protein 3C (275 aa).

A signal peptide spans 1–41 (MRMTSSSFVSYCTPGLCQFMAMLPTAGHLLPLLLVIGTGGT). In terms of domain architecture, LRRNT spans 42 to 79 (VPSPQVPPRGCYVAKEAGERTFRCSQAGLSAVPSGIPN). LRR repeat units follow at residues 80 to 101 (DTRK…AFQH), 104 to 125 (VLEE…AFQG), and 129 to 150 (TLRH…AFVG). A glycan (N-linked (GlcNAc...) asparagine) is linked at Asn-156. Residues 160 to 212 (NPWHCDCALQEVLRQVRLVPGTGTGIVCGSGARPDLVGQEFLLLAGEEELCGS) enclose the LRRCT domain. A helical transmembrane segment spans residues 225 to 245 (LLVTMGGWLTLMVAYLVHYVW).

Belongs to the LRRC3 family.

The protein resides in the membrane. In Homo sapiens (Human), this protein is Leucine-rich repeat-containing protein 3C (LRRC3C).